The chain runs to 426 residues: Tyrosine--tRNA ligase (426 aa).

L-tyrosine is bound at residue Y35. Residues P40–H49 carry the 'HIGH' region motif. L-tyrosine-binding residues include Y172 and Q176. Positions K232 to S236 match the 'KMSKS' region motif. K235 provides a ligand contact to ATP. The S4 RNA-binding domain maps to E357–G414.

Belongs to the class-I aminoacyl-tRNA synthetase family. TyrS type 1 subfamily. In terms of assembly, homodimer.

The protein resides in the cytoplasm. It carries out the reaction tRNA(Tyr) + L-tyrosine + ATP = L-tyrosyl-tRNA(Tyr) + AMP + diphosphate + H(+). In terms of biological role, catalyzes the attachment of tyrosine to tRNA(Tyr) in a two-step reaction: tyrosine is first activated by ATP to form Tyr-AMP and then transferred to the acceptor end of tRNA(Tyr). The polypeptide is Tyrosine--tRNA ligase (Wigglesworthia glossinidia brevipalpis).